A 139-amino-acid polypeptide reads, in one-letter code: MANSASGMAVGDECKLKFQELKSKRSFRFITFKIDERTQQVVVDRLGQPGDTYDDFTASMPASECRYAVFDFDFVTDENCQKSKIFFISWSPDTSKVRSKMLYASSKDRFKRELDGIQVELQATDPSEMSMDIVKARAL.

The region spanning 5 to 139 is the ADF-H domain; it reads ASGMAVGDEC…SMDIVKARAL (135 aa).

This sequence belongs to the actin-binding proteins ADF family.

Its function is as follows. Actin-depolymerizing protein. Severs actin filaments (F-actin) and binds to actin monomers. The protein is Actin-depolymerizing factor 6 (ADF6) of Oryza sativa subsp. japonica (Rice).